The sequence spans 106 residues: Movement protein TGB2 (106 aa).

Over 1-9 (MPLTPPPDH) the chain is Cytoplasmic. A helical membrane pass occupies residues 10–30 (TKVLLVAAIGLSIVASILTYS). Residues 31 to 71 (RNTLPQVGDHSHLLPHGGVYKDGTKTIVYGGPRKLNSLEGG) lie on the Lumenal side of the membrane. A helical transmembrane segment spans residues 72–92 (FNLPVQPWFLVILLSAAIFLL). The Cytoplasmic segment spans residues 93 to 106 (SCRSGHRRVCGQCH).

The protein belongs to the Tymovirales TGBp2 protein family.

Its subcellular location is the host endoplasmic reticulum membrane. Its function is as follows. Plays a role in viral cell-to-cell propagation, by facilitating genome transport to neighboring plant cells through plasmosdesmata,. In Chrysanthemum morifolium (Florist's daisy), this protein is Movement protein TGB2.